We begin with the raw amino-acid sequence, 122 residues long: Large ribosomal subunit protein bL12 (122 aa).

This sequence belongs to the bacterial ribosomal protein bL12 family. In terms of assembly, homodimer. Part of the ribosomal stalk of the 50S ribosomal subunit. Forms a multimeric L10(L12)X complex, where L10 forms an elongated spine to which 2 to 4 L12 dimers bind in a sequential fashion. Binds GTP-bound translation factors.

Functionally, forms part of the ribosomal stalk which helps the ribosome interact with GTP-bound translation factors. Is thus essential for accurate translation. The sequence is that of Large ribosomal subunit protein bL12 from Levilactobacillus brevis (strain ATCC 367 / BCRC 12310 / CIP 105137 / JCM 1170 / LMG 11437 / NCIMB 947 / NCTC 947) (Lactobacillus brevis).